We begin with the raw amino-acid sequence, 193 residues long: Large ribosomal subunit protein bL12cy (193 aa).

A chloroplast-targeting transit peptide spans 1–59 (MAATTLSIATTIRSSSFSSGLASAHHFPSRPLSIEFPFSFGVSSSSTLSHRAIYLHPIS). Positions 170–187 (GVTKDEAEEDKTQLEEAG) are enriched in basic and acidic residues. A disordered region spans residues 170-193 (GVTKDEAEEDKTQLEEAGAKVSIV).

Belongs to the bacterial ribosomal protein bL12 family.

The protein resides in the plastid. The protein localises to the chloroplast. In Arabidopsis thaliana (Mouse-ear cress), this protein is Large ribosomal subunit protein bL12cy (RPL12B).